The sequence spans 218 residues: Ribose-5-phosphate isomerase A (218 aa).

Substrate-binding positions include 28 to 31, 81 to 84, and 94 to 97; these read TGST, DGAD, and KGGG. Glutamate 103 acts as the Proton acceptor in catalysis. Residue lysine 121 participates in substrate binding.

The protein belongs to the ribose 5-phosphate isomerase family. Homodimer.

The catalysed reaction is aldehydo-D-ribose 5-phosphate = D-ribulose 5-phosphate. Its pathway is carbohydrate degradation; pentose phosphate pathway; D-ribose 5-phosphate from D-ribulose 5-phosphate (non-oxidative stage): step 1/1. Functionally, catalyzes the reversible conversion of ribose-5-phosphate to ribulose 5-phosphate. This Shewanella piezotolerans (strain WP3 / JCM 13877) protein is Ribose-5-phosphate isomerase A.